Consider the following 209-residue polypeptide: tRNA(Phe) 7-((3-amino-3-carboxypropyl)-4-demethylwyosine(37)-N(4))-methyltransferase (209 aa).

Belongs to the TYW3 family.

It catalyses the reaction 4-demethyl-7-[(3S)-3-amino-3-carboxypropyl]wyosine(37) in tRNA(Phe) + S-adenosyl-L-methionine = 7-[(3S)-3-amino-3-carboxypropyl]wyosine(37) in tRNA(Phe) + S-adenosyl-L-homocysteine + H(+). Functionally, S-adenosyl-L-methionine-dependent methyltransferase that acts as a component of the wyosine derivatives biosynthesis pathway. Probably methylates N-4 position of wybutosine-86 to produce wybutosine-72. The polypeptide is tRNA(Phe) 7-((3-amino-3-carboxypropyl)-4-demethylwyosine(37)-N(4))-methyltransferase (Saccharolobus solfataricus (strain ATCC 35092 / DSM 1617 / JCM 11322 / P2) (Sulfolobus solfataricus)).